The primary structure comprises 517 residues: Cytochrome P450 monooxygenase TRI4 (517 aa).

The helical transmembrane segment at 15–37 (AVGAAVAVGALYFFCQCFYNLYL) threads the bilayer. A glycan (N-linked (GlcNAc...) asparagine) is linked at Asn-444. Heme is bound at residue Cys-452.

This sequence belongs to the cytochrome P450 family. It depends on heme as a cofactor.

It localises to the membrane. The protein operates within sesquiterpene biosynthesis; trichothecene biosynthesis. Functionally, cytochrome P450 monooxygenase; part of the gene cluster that mediates the production of the antimicrobial trichothecene harzianum A (HA) that plays a role in Botrytis cinerea antagonistic activity and plant defense priming. The biosynthesis of harzianum A begins with the cyclization of farnesyl diphosphate to trichodiene and is catalyzed by the trichodiene synthase TRI5. Trichodiene undergoes a series of oxygenations catalyzed by the cytochrome P450 monooxygenase TRI4. TRI4 controls the addition of 3 oxygens at C-2, C-11, and the C-12, C-13-epoxide to form the intermediate isotrichodiol. Isotrichodiol then undergoes a non-enzymatic isomerization and cyclization to form 12,13-epoxytrichothec-9-ene (EPT) which is further converted to trichodermol by the cytochrome P450 monooxygenase TRI11 via C-4 hydroxylation. The last step of HA synthesis is esterification of an octatriendioyl moiety to the C-4 oxygen of trichodermol. The octatriendioyl moiety is probably produced by the polyketide synthase TRI17 and the esterification performed by the trichothecene O-acetyltransferase TRI3. The protein is Cytochrome P450 monooxygenase TRI4 of Trichoderma arundinaceum.